A 163-amino-acid polypeptide reads, in one-letter code: Nucleotide-binding protein BA_1166 (163 aa).

The protein belongs to the YajQ family.

Functionally, nucleotide-binding protein. The chain is Nucleotide-binding protein BA_1166 from Bacillus anthracis.